Consider the following 457-residue polypeptide: Probable xyloglucan 6-xylosyltransferase 3 (457 aa).

A disordered region spans residues methionine 1–glycine 40. The Cytoplasmic segment spans residues methionine 1–lysine 51. Residues methionine 52–asparagine 71 traverse the membrane as a helical; Signal-anchor for type II membrane protein segment. The Lumenal portion of the chain corresponds to phenylalanine 72–serine 457. 2 N-linked (GlcNAc...) asparagine glycosylation sites follow: asparagine 115 and asparagine 431.

The protein belongs to the glycosyltransferase 34 family.

It localises to the golgi apparatus membrane. The catalysed reaction is Transfers an alpha-D-xylosyl residue from UDP-D-xylose to a glucose residue in xyloglucan, forming an alpha-(1-&gt;6)-D-xylosyl-D-glucose linkage.. Probable xyloglucan xylosyltransferase involved in the biosynthesis of xyloglucan. This chain is Probable xyloglucan 6-xylosyltransferase 3, found in Arabidopsis thaliana (Mouse-ear cress).